The sequence spans 361 residues: 3-dehydroquinate synthase (361 aa).

NAD(+) contacts are provided by residues 70–75 (DGEQHK), 104–108 (GVVGD), 128–129 (TT), K141, and K150. Zn(2+) is bound by residues E183, H246, and H263.

Belongs to the sugar phosphate cyclases superfamily. Dehydroquinate synthase family. Co(2+) serves as cofactor. The cofactor is Zn(2+). NAD(+) is required as a cofactor.

The protein resides in the cytoplasm. The catalysed reaction is 7-phospho-2-dehydro-3-deoxy-D-arabino-heptonate = 3-dehydroquinate + phosphate. The protein operates within metabolic intermediate biosynthesis; chorismate biosynthesis; chorismate from D-erythrose 4-phosphate and phosphoenolpyruvate: step 2/7. Functionally, catalyzes the conversion of 3-deoxy-D-arabino-heptulosonate 7-phosphate (DAHP) to dehydroquinate (DHQ). The protein is 3-dehydroquinate synthase of Teredinibacter turnerae (strain ATCC 39867 / T7901).